The chain runs to 73 residues: MATEKSVTPTEEQLEILEYNFCKVNKHPDPTTLCLIAAETGLSEEQTLKWFKQRLAEWRKSEGLPSECGSVRD.

Residues 3-62 constitute a DNA-binding region (homeobox; degenerate); it reads TEKSVTPTEEQLEILEYNFCKVNKHPDPTTLCLIAAETGLSEEQTLKWFKQRLAEWRKSE.

It localises to the nucleus. Its subcellular location is the cytoplasm. Atypical homeodomain protein which does not bind DNA and is required to modulate cardiac growth and development. May act via an interaction with SRF, leading to modulate the expression of SRF-dependent cardiac-specific genes and cardiac development. May act as a co-chaperone for HSPA1A and HSPA1B chaperone proteins and assist in chaperone-mediated protein refolding. This Gallus gallus (Chicken) protein is Homeodomain-only protein (HOPX).